A 151-amino-acid polypeptide reads, in one-letter code: Actin-depolymerizing factor 10 (151 aa).

The ADF-H domain maps to 15–149 (PAWIEVPEKS…DLEVLRGRAN (135 aa)).

It belongs to the actin-binding proteins ADF family.

Actin-depolymerizing protein. Severs actin filaments (F-actin) and binds to actin monomers. This is Actin-depolymerizing factor 10 (ADF10) from Oryza sativa subsp. japonica (Rice).